The primary structure comprises 311 residues: Acetyl-coenzyme A carboxylase carboxyl transferase subunit alpha (311 aa).

The CoA carboxyltransferase C-terminal domain occupies 36–286 (NLSKEISKVY…ANYFISELAE (251 aa)).

The protein belongs to the AccA family. As to quaternary structure, acetyl-CoA carboxylase is a heterohexamer composed of biotin carboxyl carrier protein (AccB), biotin carboxylase (AccC) and two subunits each of ACCase subunit alpha (AccA) and ACCase subunit beta (AccD).

It localises to the cytoplasm. It catalyses the reaction N(6)-carboxybiotinyl-L-lysyl-[protein] + acetyl-CoA = N(6)-biotinyl-L-lysyl-[protein] + malonyl-CoA. Its pathway is lipid metabolism; malonyl-CoA biosynthesis; malonyl-CoA from acetyl-CoA: step 1/1. Its function is as follows. Component of the acetyl coenzyme A carboxylase (ACC) complex. First, biotin carboxylase catalyzes the carboxylation of biotin on its carrier protein (BCCP) and then the CO(2) group is transferred by the carboxyltransferase to acetyl-CoA to form malonyl-CoA. In Campylobacter concisus (strain 13826), this protein is Acetyl-coenzyme A carboxylase carboxyl transferase subunit alpha.